The following is a 102-amino-acid chain: Phosphoribosyl-ATP pyrophosphatase (102 aa).

This sequence belongs to the PRA-PH family.

Its subcellular location is the cytoplasm. The catalysed reaction is 1-(5-phospho-beta-D-ribosyl)-ATP + H2O = 1-(5-phospho-beta-D-ribosyl)-5'-AMP + diphosphate + H(+). Its pathway is amino-acid biosynthesis; L-histidine biosynthesis; L-histidine from 5-phospho-alpha-D-ribose 1-diphosphate: step 2/9. This is Phosphoribosyl-ATP pyrophosphatase from Ignicoccus hospitalis (strain KIN4/I / DSM 18386 / JCM 14125).